A 481-amino-acid chain; its full sequence is Glutamyl-tRNA(Gln) amidotransferase subunit A (481 aa).

Active-site charge relay system residues include Lys-74 and Ser-149. The active-site Acyl-ester intermediate is the Ser-173.

This sequence belongs to the amidase family. GatA subfamily. Heterotrimer of A, B and C subunits.

It catalyses the reaction L-glutamyl-tRNA(Gln) + L-glutamine + ATP + H2O = L-glutaminyl-tRNA(Gln) + L-glutamate + ADP + phosphate + H(+). Allows the formation of correctly charged Gln-tRNA(Gln) through the transamidation of misacylated Glu-tRNA(Gln) in organisms which lack glutaminyl-tRNA synthetase. The reaction takes place in the presence of glutamine and ATP through an activated gamma-phospho-Glu-tRNA(Gln). The sequence is that of Glutamyl-tRNA(Gln) amidotransferase subunit A from Francisella tularensis subsp. holarctica (strain FTNF002-00 / FTA).